We begin with the raw amino-acid sequence, 261 residues long: RNA-binding protein 1 (261 aa).

2 disordered regions span residues 1-38 (MADG…SGNE) and 232-261 (QFSR…RGRR). The 86-residue stretch at 151 to 236 (PTLYIEGLPS…SHLRLQFSRY (86 aa)) folds into the RRM domain. Residues 240–254 (RSGGGPRSSGPPRGG) are compositionally biased toward gly residues.

In terms of tissue distribution, ubiquitous.

It is found in the nucleus speckle. Its subcellular location is the cytoplasmic granule. In terms of biological role, RNA-binding protein interacting with the enod40 RNA. This Medicago truncatula (Barrel medic) protein is RNA-binding protein 1.